The chain runs to 375 residues: Homoserine O-succinyltransferase (375 aa).

One can recognise an AB hydrolase-1 domain in the interval 48-358; sequence NAVLVCHALS…PAGHDSFLLD (311 aa). Catalysis depends on Ser154, which acts as the Nucleophile. A substrate-binding site is contributed by Arg224. Active-site residues include Asp319 and His352. Asp353 is a binding site for substrate.

Belongs to the AB hydrolase superfamily. MetX family. As to quaternary structure, homodimer.

The protein resides in the cytoplasm. It catalyses the reaction L-homoserine + succinyl-CoA = O-succinyl-L-homoserine + CoA. It functions in the pathway amino-acid biosynthesis; L-methionine biosynthesis via de novo pathway; O-succinyl-L-homoserine from L-homoserine: step 1/1. Functionally, transfers a succinyl group from succinyl-CoA to L-homoserine, forming succinyl-L-homoserine. The chain is Homoserine O-succinyltransferase from Azoarcus sp. (strain BH72).